The sequence spans 254 residues: Phosphoribosylaminoimidazole-succinocarboxamide synthase (254 aa).

Belongs to the SAICAR synthetase family.

It carries out the reaction 5-amino-1-(5-phospho-D-ribosyl)imidazole-4-carboxylate + L-aspartate + ATP = (2S)-2-[5-amino-1-(5-phospho-beta-D-ribosyl)imidazole-4-carboxamido]succinate + ADP + phosphate + 2 H(+). The protein operates within purine metabolism; IMP biosynthesis via de novo pathway; 5-amino-1-(5-phospho-D-ribosyl)imidazole-4-carboxamide from 5-amino-1-(5-phospho-D-ribosyl)imidazole-4-carboxylate: step 1/2. The polypeptide is Phosphoribosylaminoimidazole-succinocarboxamide synthase (Acidiphilium cryptum (strain JF-5)).